The sequence spans 69 residues: Amphipathic peptide Hp1404 (69 aa).

An N-terminal signal peptide occupies residues 1 to 23; sequence MKTQFAILMITVVLMQMLVQTEG. Phenylalanine 37 bears the Phenylalanine amide mark. The propeptide occupies 41 to 69; the sequence is GLKNLDQLDDSFDSDLSDADVKLLREMFK.

It belongs to the non-disulfide-bridged peptide (NDBP) superfamily. Short antimicrobial peptide (group 4) family. As to expression, expressed by the venom gland.

The protein resides in the secreted. It localises to the target cell membrane. Its activity is regulated as follows. Antibacterial activity is decreased by serum. In terms of biological role, antimicrobial peptide that acts by inducing concentration-dependent membrane disruption, implying a membrane-lytic mode of action. Acts with potent activity against Gram-positive bacteria (MIC=4.04-16.16 uM) including methicillin-resistant S.aureus (MRSA). Its activity on Gram-negative bacteria is controversial. Li and colleagues (2014) describe no activity towards E.coli and P.aeruginosa, while Kim and colleagues (2018) describe a potent activity towards P.aeruginosa (MIC=3.13-12.5 uM), and Luo and colleagues (2021) describe a potent activity against antibiotic-sensitive and -resistant Acinetobacter baumannii strains (MIC=3.2-10 uM). On S.aureus, possibly acts by impairing an unknown intracellular target and/or by interacting with the membrane, leading to the lateral expansion of the membrane area at high MIC concentrations, resulting in the formation of mesosome-like structures that leads to cell lysis. Shows moderate inhibition of P.aeruginosa biofilm formation. Administration of this peptide at sub-MIC concentrations in multiple treatments does not lead to resistance in S.aureus. Exhibits low toxicity and hemolytic activity against mammalian cell lines and BALB/c mice. In vivo, improves the survival rate of the MRSA infected BALB/c mice in the peritonitis model. The sequence is that of Amphipathic peptide Hp1404 from Heterometrus petersii (Asian forest scorpion).